We begin with the raw amino-acid sequence, 182 residues long: MSHRLLFVGPPGAGKGTQAERLAANHGLLHLSTGDLLRAEVKAGSELGKEAEAVMNRGELVSDALVLAIVRSRLQSHSGGWLLDGFPRNLAQAEALDALLSELNQPLQSVLLMELDDDELVQRLLARGRADDNEEVIRHRLSVYREQTAPLINHYEQRGQLKRVVSTGTIEAVAEQITAALA.

12–17 is an ATP binding site; sequence GAGKGT. The segment at 32-61 is NMP; sequence STGDLLRAEVKAGSELGKEAEAVMNRGELV. AMP-binding positions include threonine 33, arginine 38, 59 to 61, 85 to 88, and glutamine 92; these read ELV and GFPR. The tract at residues 126–132 is LID; it reads ARGRADD. Arginine 127 provides a ligand contact to ATP. Positions 129 and 140 each coordinate AMP. Glycine 168 contacts ATP.

It belongs to the adenylate kinase family. Monomer.

The protein resides in the cytoplasm. It catalyses the reaction AMP + ATP = 2 ADP. It participates in purine metabolism; AMP biosynthesis via salvage pathway; AMP from ADP: step 1/1. Functionally, catalyzes the reversible transfer of the terminal phosphate group between ATP and AMP. Plays an important role in cellular energy homeostasis and in adenine nucleotide metabolism. The polypeptide is Adenylate kinase (Synechococcus sp. (strain RCC307)).